A 393-amino-acid polypeptide reads, in one-letter code: Cyclic GMP-AMP synthase-like receptor 1 (393 aa).

Mg(2+)-binding residues include Glu89, Asp91, and Asp205. Position 89 to 91 (Glu89 to Asp91) interacts with ATP. Residues Asp205 and Arg251–Glu258 each bind GTP. Residues Tyr255–Glu258, Lys276, and Ser289–Lys293 contribute to the ATP site.

This sequence belongs to the mab-21 family. Mg(2+) is required as a cofactor. Requires Mn(2+) as cofactor.

The catalysed reaction is GTP + ATP = 3',2'-cGAMP + 2 diphosphate. The enzyme catalyses GTP + ATP = pppA(2'-5')pG + diphosphate. It catalyses the reaction pppA(2'-5')pG = 3',2'-cGAMP + diphosphate. The enzyme activity is specifically activated by double-stranded RNA (dsRNA). Recognizes long dsRNA (&gt;30 bp) with no preference for 5' RNA phosphorylation. Functionally, nucleotidyltransferase that catalyzes the formation of cyclic GMP-AMP (3',2'-cGAMP) from ATP and GTP and plays a key role in innate immunity. Synthesizes 3',2'-cGAMP in a two-step reaction through production of the linear intermediate pppA(2'-5')pG. Acts as a key sensor of double-stranded RNA (dsRNA), the presence of dsRNA in the cytoplasm being a danger signal that triggers the immune responses. Directly binds dsRNA longer than 35 bp, activating the nucleotidyltransferase activity, leading to synthesis of 3',2'-cGAMP, a second messenger that binds to and activates Sting, thereby triggering the antiviral immune response via activation of the NF-kappa-B transcription factor Rel (Relish). The sequence is that of Cyclic GMP-AMP synthase-like receptor 1 from Drosophila simulans (Fruit fly).